A 238-amino-acid polypeptide reads, in one-letter code: RNA-binding protein pno1 (238 aa).

The region spanning glutamine 162 to isoleucine 211 is the KH domain.

The protein belongs to the PNO1 family.

It is found in the nucleus. Its subcellular location is the nucleolus. In Drosophila pseudoobscura pseudoobscura (Fruit fly), this protein is RNA-binding protein pno1 (l(1)G0004).